A 607-amino-acid chain; its full sequence is CRS2-associated factor 2, chloroplastic (607 aa).

Positions 1 to 75 (MSPPPPQRPS…GNGGNPAFRA (75 aa)) are disordered. Residues 1 to 79 (MSPPPPQRPS…NPAFRAPHLR (79 aa)) constitute a chloroplast transit peptide. CRM domains follow at residues 228-324 (EPLT…TRPR) and 346-442 (EGLT…YPKP). A CRS2 binding region spans residues 482 to 505 (KMFELWTNAIESSVALMLDDAEVD). Residues 550-576 (TEDEPETGTLEPQQHEFTESSDVAEDD) form a disordered region.

Interacts with CRS2 and RNA. Part of large ribonucleo-protein complexes that include group IIB introns, CRS2 and CAF2.

The protein localises to the plastid. It is found in the chloroplast stroma. Functionally, required for the splicing of group IIB introns in chloroplasts. Forms splicing particles with CRS2. Interacts with RNA and confers intron specificity of the splicing particles. In Oryza sativa subsp. japonica (Rice), this protein is CRS2-associated factor 2, chloroplastic.